Here is a 208-residue protein sequence, read N- to C-terminus: N-(5'-phosphoribosyl)anthranilate isomerase (208 aa).

This sequence belongs to the TrpF family.

It catalyses the reaction N-(5-phospho-beta-D-ribosyl)anthranilate = 1-(2-carboxyphenylamino)-1-deoxy-D-ribulose 5-phosphate. It participates in amino-acid biosynthesis; L-tryptophan biosynthesis; L-tryptophan from chorismate: step 3/5. The sequence is that of N-(5'-phosphoribosyl)anthranilate isomerase from Methanococcus maripaludis (strain C7 / ATCC BAA-1331).